Reading from the N-terminus, the 536-residue chain is Chorismate synthase (536 aa).

Residue His-17 is part of the active site. The disordered stretch occupies residues 37 to 59 (EDVQPQLNRRRPGQGPLSTQRRE). His-104 is a catalytic residue. The tract at residues 344–377 (ERDGCSAATLSRERASDGRTTSRHEEEVERGRER) is disordered. Residues 354-377 (SRERASDGRTTSRHEEEVERGRER) are compositionally biased toward basic and acidic residues. Asp-489 is a catalytic residue.

Belongs to the chorismate synthase family. Requires FMNH2 as cofactor.

The catalysed reaction is 5-O-(1-carboxyvinyl)-3-phosphoshikimate = chorismate + phosphate. It catalyses the reaction FMNH2 + NADP(+) = FMN + NADPH + 2 H(+). It functions in the pathway metabolic intermediate biosynthesis; chorismate biosynthesis; chorismate from D-erythrose 4-phosphate and phosphoenolpyruvate: step 7/7. In terms of biological role, bifunctional chorismate synthase and flavin reductase. Catalyzes the conversion of 5-enolpyruvylshikimate 3-phosphate (EPSP) to form chorismate. Acts also as a flavin reductase (FR) able to generate reduced flavin mononucleotide in the presence of NADPH. The protein is Chorismate synthase (AROC) of Toxoplasma gondii.